The chain runs to 496 residues: Glutamate--tRNA ligase 2 (496 aa).

A 'HIGH' region motif is present at residues P13–G23. The 'KMSKS' region motif lies at K255 to R259. Residue K258 participates in ATP binding.

It belongs to the class-I aminoacyl-tRNA synthetase family. Glutamate--tRNA ligase type 1 subfamily. In terms of assembly, monomer.

Its subcellular location is the cytoplasm. It carries out the reaction tRNA(Glu) + L-glutamate + ATP = L-glutamyl-tRNA(Glu) + AMP + diphosphate. Catalyzes the attachment of glutamate to tRNA(Glu) in a two-step reaction: glutamate is first activated by ATP to form Glu-AMP and then transferred to the acceptor end of tRNA(Glu). The sequence is that of Glutamate--tRNA ligase 2 from Rubrobacter xylanophilus (strain DSM 9941 / JCM 11954 / NBRC 16129 / PRD-1).